Here is an 801-residue protein sequence, read N- to C-terminus: MVVMLTQEMSGGGGPKAEEGQLFVAVAVKGLIGDKLGGAGSRRAVRWAVDNLLPKADKFVMIHVIPTITSIPTPNILILMFTRMWVVTAGDRLPVEEVEESVVEMYVRDVKKEYETVFVPFLKMCKSTRSTKRYFRSRRTKGTGVPLTVLRYAPETCEVYIVCKDRITTKSMDPLINREPCTSPHAAATAHDFLRDWAASFHTLRSPTLPDPRQSTEAGTRRSASARELRFEALSLTCNKPKTPQSSKASSATTPEIFRRRRGSDIPQLNYSDFDKTCTKPQSNVENIVSEHRDSDRSPPETSRKSKKVEIEEEVERLKNELQSTVFKYKQACEELFSTQNKVKMLSTEYLNESKRVNNAVEKEELQRNTAALEKERYMKAVKEVETAKALLAREFCQRQIAEVNALRTYLEKKKVIDQLLGTDHRYRKYTIEEIVTATEGFSPEKVIGEGGYGKVYQCSLDSTPAAVKVVRLDTPEKKQEFLKEVEVLSQLRHPHVVLLLGACPENGCLVYEYLENGSLEEYIFHRKNKPPLPWFIRFRVIFEVACGLAFLHSSKPEPIVHRDLKPGNILLNRNYVSKIADVGLAKLVTDVAPDNVTMYRNSVLAGTLHYIDPEYHRTGTIRPKSDLYAFGIIILQLLTARNPSGIVPAVENAVKKGTLTEMLDKSVTDWPLAETEELARIGLKCAEFRCRDRPDLKSEVIPVLKRLVETANSKVKKEGSNLRAPSHYFCPILREIMEEPEIAADGFTYERKAILAWLEKHNISPVTRQKLDHFKLTPNHTLRSAIRDWKSRVRFSNVVV.

A disordered region spans residues 205–309; sequence RSPTLPDPRQ…PETSRKSKKV (105 aa). Polar residues predominate over residues 236-254; it reads LTCNKPKTPQSSKASSATT. The span at 289–309 shows a compositional bias: basic and acidic residues; sequence VSEHRDSDRSPPETSRKSKKV. The stretch at 301–395 forms a coiled coil; the sequence is ETSRKSKKVE…ETAKALLARE (95 aa). One can recognise a Protein kinase domain in the interval 442 to 705; sequence FSPEKVIGEG…DLKSEVIPVL (264 aa). ATP contacts are provided by residues 448–456 and Lys-469; that span reads IGEGGYGKV. Catalysis depends on Asp-564, which acts as the Proton acceptor. A U-box domain is found at 724–797; sequence RAPSHYFCPI…RDWKSRVRFS (74 aa).

This sequence belongs to the protein kinase superfamily. Ser/Thr protein kinase family.

The catalysed reaction is L-seryl-[protein] + ATP = O-phospho-L-seryl-[protein] + ADP + H(+). It carries out the reaction L-threonyl-[protein] + ATP = O-phospho-L-threonyl-[protein] + ADP + H(+). The enzyme catalyses S-ubiquitinyl-[E2 ubiquitin-conjugating enzyme]-L-cysteine + [acceptor protein]-L-lysine = [E2 ubiquitin-conjugating enzyme]-L-cysteine + N(6)-ubiquitinyl-[acceptor protein]-L-lysine.. Its pathway is protein modification; protein ubiquitination. Functions as an E3 ubiquitin ligase. The chain is U-box domain-containing protein 34 (PUB34) from Arabidopsis thaliana (Mouse-ear cress).